The chain runs to 256 residues: Nuclear shuttle protein (256 aa).

The Bipartite nuclear localization signal signature appears at 21 to 42; sequence YQGFRRTAIVTRHDGKRRQHQS. The short motif at 81-96 is the Nuclear localization signal element; that stretch reads QLGKIEPNRCRSYIKL. The segment at 150–187 is interaction with Arabidopsis thaliana NSI protein; it reads ELFGARINSHGNLAVMPSLKDRFYIRHLLKRVLSVDKD.

It belongs to the begomovirus nuclear shuttle protein family. Binds to single-stranded and double-stranded viral DNA. Interacts with the host nuclear shuttle interacting (NSI) protein. This interaction may allow NSP to recruit NSI monomers to the viral genome and thus regulate nuclear export of viral genome by NSP.

The protein resides in the host nucleus. It is found in the host cytoplasm. The protein localises to the host cell membrane. In terms of biological role, binds to the genomic viral ssDNA, shuttles it into and out of the cell nucleus. Begomoviruses use 2 proteins to transport their DNA from cell to cell. The nuclear shuttle protein (NSP) shuttles it between nucleus and cytoplasm and the movement protein (MP) probably transports the DNA-NSP complex to the cell periphery and facilitates movement across the cell wall. This is Nuclear shuttle protein from Macroptilium lathyroides (Lima bean).